The primary structure comprises 646 residues: Tyrosine-protein kinase MasK (646 aa).

Topologically, residues 1 to 415 (MSPPQTTLPV…PTAGGRRWRT (415 aa)) are periplasmic. One can recognise a Protein kinase domain in the interval 25–300 (YVLVRKLAEG…AFADALETFL (276 aa)). Residues 31 to 39 (LAEGGMAEI) and Lys-57 each bind ATP. Residue Asp-163 is the Proton acceptor of the active site. The segment at 373–410 (TSAQRPGMSMRPSSPGVPAHGAASRGSTSPESAPTAGG) is disordered. The chain crosses the membrane as a helical span at residues 416–433 (LAVGLAGGLMLAAAGIVG). Residues 434–646 (YRQWMTTPAS…VMPFSWRVTQ (213 aa)) lie on the Cytoplasmic side of the membrane. Positions 521–547 (AGAASDVEAEADEEGADAAPVRSKKAS) are disordered. Acidic residues predominate over residues 527-536 (VEAEADEEGA).

Belongs to the protein kinase superfamily. Tyr protein kinase family. In terms of assembly, interacts with MglA. Post-translationally, autophosphorylated.

It localises to the cell inner membrane. The catalysed reaction is L-tyrosyl-[protein] + ATP = O-phospho-L-tyrosyl-[protein] + ADP + H(+). In terms of biological role, essential for growth. Interacts with MglA to control social gliding motility. This Myxococcus xanthus (strain DK1622) protein is Tyrosine-protein kinase MasK (masK).